We begin with the raw amino-acid sequence, 179 residues long: Large ribosomal subunit protein uL5 (179 aa).

This sequence belongs to the universal ribosomal protein uL5 family. As to quaternary structure, part of the 50S ribosomal subunit; part of the 5S rRNA/L5/L18/L25 subcomplex. Contacts the 5S rRNA and the P site tRNA. Forms a bridge to the 30S subunit in the 70S ribosome.

Its function is as follows. This is one of the proteins that bind and probably mediate the attachment of the 5S RNA into the large ribosomal subunit, where it forms part of the central protuberance. In the 70S ribosome it contacts protein S13 of the 30S subunit (bridge B1b), connecting the 2 subunits; this bridge is implicated in subunit movement. Contacts the P site tRNA; the 5S rRNA and some of its associated proteins might help stabilize positioning of ribosome-bound tRNAs. The polypeptide is Large ribosomal subunit protein uL5 (Pasteurella multocida (strain Pm70)).